The primary structure comprises 230 residues: MFRGKKYQESSKLIDRLKLYEPSEALELAQKTAKAKFDETIEVHIKLGVDSRHADQQVRGAVVLPHGTGKKVRVLVFAKGDKAKEAEQAGADFVGGEELISKIQNENWFDYDVVVATPDMMGVVGRLGKVLGPKGLMPNPKAGTVSMDVAKAIADIKAGKIEYRLDKTNIIHCPIGKASFGNEKLMDNFRTLLGAIIKAKPAAAKGQYLKSVVVTSTMGPGIKINPLRVE.

This sequence belongs to the universal ribosomal protein uL1 family. As to quaternary structure, part of the 50S ribosomal subunit.

Its function is as follows. Binds directly to 23S rRNA. The L1 stalk is quite mobile in the ribosome, and is involved in E site tRNA release. In terms of biological role, protein L1 is also a translational repressor protein, it controls the translation of the L11 operon by binding to its mRNA. This is Large ribosomal subunit protein uL1 from Ruminiclostridium cellulolyticum (strain ATCC 35319 / DSM 5812 / JCM 6584 / H10) (Clostridium cellulolyticum).